A 194-amino-acid chain; its full sequence is MIRIDELLRAYRRGYFPMSDPEDEKVYWCQPYKRAVFCLDSYRPSRDVLRLTRKKEFTVTLDKEFAGVIKGCAAPRKNDHETWISDEIIEAYTKLHSLGIAHSFESWYQGELVGGLYGIALGGAFFGESMFSRRSYASRIAFDHLVFHLREKGYLLLDAQIMNPHLQRLGAVEIEHEEYMRQLAHALQKKIVFL.

The protein belongs to the L/F-transferase family.

The protein resides in the cytoplasm. The enzyme catalyses N-terminal L-lysyl-[protein] + L-leucyl-tRNA(Leu) = N-terminal L-leucyl-L-lysyl-[protein] + tRNA(Leu) + H(+). It catalyses the reaction N-terminal L-arginyl-[protein] + L-leucyl-tRNA(Leu) = N-terminal L-leucyl-L-arginyl-[protein] + tRNA(Leu) + H(+). The catalysed reaction is L-phenylalanyl-tRNA(Phe) + an N-terminal L-alpha-aminoacyl-[protein] = an N-terminal L-phenylalanyl-L-alpha-aminoacyl-[protein] + tRNA(Phe). Functionally, functions in the N-end rule pathway of protein degradation where it conjugates Leu, Phe and, less efficiently, Met from aminoacyl-tRNAs to the N-termini of proteins containing an N-terminal arginine or lysine. This chain is Leucyl/phenylalanyl-tRNA--protein transferase, found in Pelodictyon phaeoclathratiforme (strain DSM 5477 / BU-1).